We begin with the raw amino-acid sequence, 399 residues long: Aspartate aminotransferase (399 aa).

Residues Gly-42 and Asn-179 each coordinate L-aspartate. An N6-(pyridoxal phosphate)lysine modification is found at Lys-240. Arg-372 contacts L-aspartate.

It belongs to the class-I pyridoxal-phosphate-dependent aminotransferase family. Homodimer. It depends on pyridoxal 5'-phosphate as a cofactor.

It is found in the cytoplasm. The enzyme catalyses L-aspartate + 2-oxoglutarate = oxaloacetate + L-glutamate. This Sulfurisphaera tokodaii (strain DSM 16993 / JCM 10545 / NBRC 100140 / 7) (Sulfolobus tokodaii) protein is Aspartate aminotransferase (aspC).